A 104-amino-acid polypeptide reads, in one-letter code: MPGIRKGDTVKIISGKEKGKQGKVLELLPEKGRVRIEKLMLVKRHQKKGRSQATPEGGIIEKEGTVAISNVMVLVGDKPVRREKIKRELGAKEKARADRRKTAK.

The span at 85-96 (IKRELGAKEKAR) shows a compositional bias: basic and acidic residues. The tract at residues 85–104 (IKRELGAKEKARADRRKTAK) is disordered.

It belongs to the universal ribosomal protein uL24 family. In terms of assembly, part of the 50S ribosomal subunit.

In terms of biological role, one of two assembly initiator proteins, it binds directly to the 5'-end of the 23S rRNA, where it nucleates assembly of the 50S subunit. One of the proteins that surrounds the polypeptide exit tunnel on the outside of the subunit. This Anaeromyxobacter sp. (strain Fw109-5) protein is Large ribosomal subunit protein uL24.